The chain runs to 531 residues: Bifunctional aspartate aminotransferase and L-aspartate beta-decarboxylase (531 aa).

2 residues coordinate L-aspartate: G114 and N255. K314 carries the post-translational modification N6-(pyridoxal phosphate)lysine. Position 496 (R496) interacts with L-aspartate.

Belongs to the class-I pyridoxal-phosphate-dependent aminotransferase family. As to quaternary structure, homododecamer. The cofactor is pyridoxal 5'-phosphate.

The catalysed reaction is L-aspartate + H(+) = L-alanine + CO2. The enzyme catalyses L-aspartate + 2-oxoglutarate = oxaloacetate + L-glutamate. Its activity is regulated as follows. Inhibited by 10 mM Co(2+), Mn(2+) and Ni(2+), and by 1 mM Cu(2+) and Hg(2+). Functionally, bifunctional enzyme that has both L-aspartate decarboxylase and transaminase activity. Has high activity with L-aspartate, and much lower activity with D-aspartate, L-lysine and L-glutamine. This is Bifunctional aspartate aminotransferase and L-aspartate beta-decarboxylase from Pseudomonas sp.